The following is a 134-amino-acid chain: Large ribosomal subunit protein bL20 (134 aa).

Belongs to the bacterial ribosomal protein bL20 family.

Functionally, binds directly to 23S ribosomal RNA and is necessary for the in vitro assembly process of the 50S ribosomal subunit. It is not involved in the protein synthesizing functions of that subunit. In Brucella anthropi (strain ATCC 49188 / DSM 6882 / CCUG 24695 / JCM 21032 / LMG 3331 / NBRC 15819 / NCTC 12168 / Alc 37) (Ochrobactrum anthropi), this protein is Large ribosomal subunit protein bL20.